Reading from the N-terminus, the 471-residue chain is Histidinol dehydrogenase (471 aa).

Tyr-139, Gln-204, and Asn-236 together coordinate NAD(+). Substrate is bound by residues Thr-259, Gln-281, and His-284. 2 residues coordinate Zn(2+): Gln-281 and His-284. Active-site proton acceptor residues include Glu-350 and His-351. Substrate-binding residues include His-351, Asp-384, Glu-438, and His-443. Zn(2+) is bound at residue Asp-384. His-443 provides a ligand contact to Zn(2+).

This sequence belongs to the histidinol dehydrogenase family. Requires Zn(2+) as cofactor.

It carries out the reaction L-histidinol + 2 NAD(+) + H2O = L-histidine + 2 NADH + 3 H(+). It functions in the pathway amino-acid biosynthesis; L-histidine biosynthesis; L-histidine from 5-phospho-alpha-D-ribose 1-diphosphate: step 9/9. Its function is as follows. Catalyzes the sequential NAD-dependent oxidations of L-histidinol to L-histidinaldehyde and then to L-histidine. The sequence is that of Histidinol dehydrogenase from Bifidobacterium longum (strain NCC 2705).